A 413-amino-acid polypeptide reads, in one-letter code: MACARPLISVYSEKGESSGKNVTLPAVFKAPIRPDIVNFVHTNLRKNNRQPYAVSELAGHQTSAESWGTGRAVARIPRVRGGGTHRSGQGAFGNMCRGGRMFAPTKTWRRWHRRVNTTQKRYAICSALAASALPALVMSKGHRIEEVPELPLVVEDKVEGYKKTKEAVLLLKKLKAWNDIKKVYASQRMRAGKGKMRNRRRIQRRGPCVIYNEDNGIVKAFRNIPGITLLNVTKLNILKLAPGGHVGRFCIWTESAFRKLDDLYGTWRKAASLKSNYNLPMHKMLNTDLSRILKSPEIQRALRAPRKKIHRRVLKKNPLKNLRIMLKLNPYAKTMRRNTILRQARNHKLRVERAAAALAAKSDPKEAPAKKKPVVGKKKKPVVGRKAAAAKKPAADKKAADKRAGPEDKKPAA.

Ala2 carries the N-acetylalanine modification. Position 14 is an N6-acetyllysine (Lys14). Arg97 bears the Omega-N-methylarginine mark. N6-acetyllysine is present on Lys106. Lys239 is covalently cross-linked (Glycyl lysine isopeptide (Lys-Gly) (interchain with G-Cter in SUMO2)). At Lys259 the chain carries N6-acetyllysine. Residue Thr266 is modified to Phosphothreonine. Ser290 and Ser295 each carry phosphoserine. Arg300 carries the citrulline modification. Lys327 participates in a covalent cross-link: Glycyl lysine isopeptide (Lys-Gly) (interchain with G-Cter in SUMO2). Lys333 is subject to N6-acetyllysine. Positions 355–413 are disordered; sequence AAALAAKSDPKEAPAKKKPVVGKKKKPVVGRKAAAAKKPAADKKAADKRAGPEDKKPAA. Lys361 carries the N6-acetyllysine; alternate modification. Lys361 is covalently cross-linked (Glycyl lysine isopeptide (Lys-Gly) (interchain with G-Cter in SUMO1); alternate). Ser362 bears the Phosphoserine mark. The segment covering 370–383 has biased composition (basic residues); the sequence is KKKPVVGKKKKPVV. Basic and acidic residues predominate over residues 393-413; it reads PAADKKAADKRAGPEDKKPAA.

This sequence belongs to the universal ribosomal protein uL4 family. As to quaternary structure, component of the large ribosomal subunit. May bind IPO9 with low affinity. Interacts with RBM3. Citrullinated by PADI4.

The protein localises to the cytoplasm. Its function is as follows. Component of the large ribosomal subunit. The ribosome is a large ribonucleoprotein complex responsible for the synthesis of proteins in the cell. This chain is Large ribosomal subunit protein uL4 (RPL4), found in Oryctolagus cuniculus (Rabbit).